The chain runs to 415 residues: uncharacterized protein (415 aa).

10 helical membrane passes run 20–40 (MAYL…FGIL), 43–63 (LMPI…PAIA), 78–98 (IPIL…TPYI), 109–129 (LPNI…VIAF), 155–175 (VILV…LSIS), 243–263 (IVIM…SSLI), 300–320 (IFSS…LIAF), 328–348 (GILC…YTLI), 360–380 (ISFY…LILV), and 388–408 (GSLA…FAIL).

This sequence belongs to the polysaccharide synthase family.

It localises to the cell membrane. This is an uncharacterized protein from Methanocaldococcus jannaschii (strain ATCC 43067 / DSM 2661 / JAL-1 / JCM 10045 / NBRC 100440) (Methanococcus jannaschii).